The chain runs to 1128 residues: Scavenger receptor cysteine-rich domain superfamily protein (1128 aa).

An N-terminal signal peptide occupies residues 1-24 (MTSLRRGNICWVAVCAALLTLTRG). Residues 25–1051 (IDVIAKPSRT…VGAQAGPAGG (1027 aa)) lie on the Extracellular side of the membrane. 9 SRCR domains span residues 40 to 140 (VQLV…VVCN), 143 to 245 (VRLA…VICT), 248 to 348 (IRLV…VICT), 351 to 450 (VRLV…AKCQ), 453 to 553 (VQLV…VVCR), 555 to 654 (IRLA…VVCR), 657 to 757 (LRLA…VVCT), 759 to 866 (LRLT…VLCK), and 868 to 968 (IRLV…VQCK). Cystine bridges form between Cys65–Cys129, Cys78–Cys139, Cys109–Cys119, Cys168–Cys234, Cys181–Cys244, Cys212–Cys222, Cys273–Cys337, Cys286–Cys347, Cys316–Cys326, Cys376–Cys439, Cys389–Cys449, Cys419–Cys429, Cys478–Cys542, Cys491–Cys552, Cys522–Cys532, Cys583–Cys644, Cys596–Cys653, Cys624–Cys634, Cys682–Cys746, Cys695–Cys756, and Cys726–Cys736. N-linked (GlcNAc...) asparagine glycosylation is present at Asn87. N-linked (GlcNAc...) asparagine glycans are attached at residues Asn190 and Asn194. Residue Asn229 is glycosylated (N-linked (GlcNAc...) asparagine). Asn422 carries an N-linked (GlcNAc...) asparagine glycan. Asn601 and Asn612 each carry an N-linked (GlcNAc...) asparagine glycan. N-linked (GlcNAc...) asparagine glycans are attached at residues Asn765, Asn808, Asn834, and Asn936. 6 disulfides stabilise this stretch: Cys803–Cys865, Cys833–Cys843, Cys906–Cys967, Cys937–Cys947, Cys971–Cys1013, and Cys999–Cys1026. Residues 969–1028 (AGCDWPGPIRHGSFSPNRSSYDPLTTIDVKCDAGYELMGSKTLQCVTGCDWSRPTPECQR) form the Sushi domain. An N-linked (GlcNAc...) asparagine glycan is attached at Asn985. N-linked (GlcNAc...) asparagine glycosylation is present at Asn1031. A helical transmembrane segment spans residues 1052–1072 (VMLIIGIILGAVVMMLIACVA). Topologically, residues 1073–1128 (LYLKGRNKNIGRGNPATTSAIWKPKKEFDELKEPVLSFSAMTAGGAGPEDGMGEDI) are cytoplasmic.

In terms of tissue distribution, from the mid-gastrula stage, expressed only in mesenchyme cells that are migrating toward the body wall. At the brachiolaria stage, expressed in presumptive coelomocytes of the coelomic pouch. Also expressed in adult coelomocytes (at protein level).

Its subcellular location is the cytoplasmic vesicle membrane. Involved in aggregate formation and phagocytosis by larval mesenchyme cells and adult coelomocytes. Binds to bacteria and may act as an opsonin in the innate immune system. The polypeptide is Scavenger receptor cysteine-rich domain superfamily protein (Patiria pectinifera (Starfish)).